Consider the following 347-residue polypeptide: Dolichyl-diphosphooligosaccharide--protein glycosyltransferase subunit TUSC3 (347 aa).

Positions 1–41 (MSARAAPSRRRQAGRRLRYLPTGSFPFLLLLLLLCIQLGGG) are cleaved as a signal peptide. At 42 to 196 (QKKKENLLAE…DVHIRVFRPP (155 aa)) the chain is on the lumenal side. Residues 59-187 (WSSRRSIFRM…LAKWIADRTD (129 aa)) enclose the Thioredoxin domain. Residue N83 is glycosylated (N-linked (GlcNAc...) asparagine). Residues C99 and C102 are joined by a disulfide bond. Residues 197 to 217 (NYSGTIALALLVSLVGGLLYL) traverse the membrane as a helical segment. At 218–221 (RRNN) the chain is on the cytoplasmic side. A helical transmembrane segment spans residues 222–242 (LEFIYNKTGWAMVSLCIVFAM). Residues 243-276 (TSGQMWNHIRGPPYAHKNPHNGQVSYIHGSSQAQ) lie on the Lumenal side of the membrane. The helical transmembrane segment at 277-297 (FVAESHIILVLNAAITMGMVL) threads the bilayer. The Cytoplasmic segment spans residues 298-312 (LNEAATSKGDVGKRR). The chain crosses the membrane as a helical span at residues 313–333 (IICLVGLGLVVFFFSFLLSIF). The Lumenal segment spans residues 334–347 (RSKYHGYPYSFLIK).

This sequence belongs to the OST3/OST6 family. Accessory component of the STT3B-containing form of the oligosaccharyltransferase (OST) complex. OST exists in two different complex forms which contain common core subunits RPN1, RPN2, OST48, OST4, DAD1 and TMEM258, either STT3A or STT3B as catalytic subunits, and form-specific accessory subunits. OST can form stable complexes with the Sec61 complex or with both the Sec61 and TRAP complexes. The association of TUSC3 or MAGT1 with the STT3B-containing complex seems to be mutually exclusvice.

The protein resides in the endoplasmic reticulum membrane. Its pathway is protein modification; protein glycosylation. Its function is as follows. Acts as accessory component of the N-oligosaccharyl transferase (OST) complex which catalyzes the transfer of a high mannose oligosaccharide from a lipid-linked oligosaccharide donor to an asparagine residue within an Asn-X-Ser/Thr consensus motif in nascent polypeptide chains. Involved in N-glycosylation of STT3B-dependent substrates. Specifically required for the glycosylation of a subset of acceptor sites that are near cysteine residues; in this function seems to act redundantly with MAGT1. In its oxidized form proposed to form transient mixed disulfides with a glycoprotein substrate to facilitate access of STT3B to the unmodified acceptor site. Also has oxidoreductase-independent functions in the STT3B-containing OST complex possibly involving substrate recognition. Could indirectly play a role in Mg(2+) transport. The polypeptide is Dolichyl-diphosphooligosaccharide--protein glycosyltransferase subunit TUSC3 (Tusc3) (Mus musculus (Mouse)).